A 347-amino-acid chain; its full sequence is Protein RecA (347 aa).

Residue 65-72 (GPESSGKT) participates in ATP binding. The disordered stretch occupies residues 328–347 (SPAQPEAPAAGEKPEQEEEF).

It belongs to the RecA family.

It is found in the cytoplasm. Functionally, can catalyze the hydrolysis of ATP in the presence of single-stranded DNA, the ATP-dependent uptake of single-stranded DNA by duplex DNA, and the ATP-dependent hybridization of homologous single-stranded DNAs. It interacts with LexA causing its activation and leading to its autocatalytic cleavage. In Vibrio parahaemolyticus serotype O3:K6 (strain RIMD 2210633), this protein is Protein RecA.